A 416-amino-acid chain; its full sequence is Serine hydroxymethyltransferase (416 aa).

Residues L117 and 121–123 each bind (6S)-5,6,7,8-tetrahydrofolate; that span reads GHL. The residue at position 226 (K226) is an N6-(pyridoxal phosphate)lysine.

This sequence belongs to the SHMT family. In terms of assembly, homodimer. Requires pyridoxal 5'-phosphate as cofactor.

It is found in the cytoplasm. The enzyme catalyses (6R)-5,10-methylene-5,6,7,8-tetrahydrofolate + glycine + H2O = (6S)-5,6,7,8-tetrahydrofolate + L-serine. It participates in one-carbon metabolism; tetrahydrofolate interconversion. Its pathway is amino-acid biosynthesis; glycine biosynthesis; glycine from L-serine: step 1/1. In terms of biological role, catalyzes the reversible interconversion of serine and glycine with tetrahydrofolate (THF) serving as the one-carbon carrier. This reaction serves as the major source of one-carbon groups required for the biosynthesis of purines, thymidylate, methionine, and other important biomolecules. Also exhibits THF-independent aldolase activity toward beta-hydroxyamino acids, producing glycine and aldehydes, via a retro-aldol mechanism. This is Serine hydroxymethyltransferase from Leptospira biflexa serovar Patoc (strain Patoc 1 / Ames).